The primary structure comprises 113 residues: Ribonuclease P protein component (113 aa).

The protein belongs to the RnpA family. As to quaternary structure, consists of a catalytic RNA component (M1 or rnpB) and a protein subunit.

The enzyme catalyses Endonucleolytic cleavage of RNA, removing 5'-extranucleotides from tRNA precursor.. In terms of biological role, RNaseP catalyzes the removal of the 5'-leader sequence from pre-tRNA to produce the mature 5'-terminus. It can also cleave other RNA substrates such as 4.5S RNA. The protein component plays an auxiliary but essential role in vivo by binding to the 5'-leader sequence and broadening the substrate specificity of the ribozyme. This is Ribonuclease P protein component from Clavibacter michiganensis subsp. michiganensis (strain NCPPB 382).